Reading from the N-terminus, the 364-residue chain is N-acetyl-gamma-glutamyl-phosphate reductase (364 aa).

Residue Cys157 is part of the active site.

The protein belongs to the NAGSA dehydrogenase family. Type 1 subfamily.

The protein localises to the cytoplasm. The enzyme catalyses N-acetyl-L-glutamate 5-semialdehyde + phosphate + NADP(+) = N-acetyl-L-glutamyl 5-phosphate + NADPH + H(+). It participates in amino-acid biosynthesis; L-arginine biosynthesis; N(2)-acetyl-L-ornithine from L-glutamate: step 3/4. In terms of biological role, catalyzes the NADPH-dependent reduction of N-acetyl-5-glutamyl phosphate to yield N-acetyl-L-glutamate 5-semialdehyde. The protein is N-acetyl-gamma-glutamyl-phosphate reductase of Bifidobacterium longum (strain DJO10A).